Reading from the N-terminus, the 181-residue chain is MLELTKRITHVDASEIHDNLVLPYELRIRGRLRATTETNLDVGLFLDRGPVLRDGDLLEAKSGEIIRIRAAEEPVVTARVETGLPLARLCYHLGNRHVSLQIGSGGAIGEDDRMGWVRFPPDHVLEELAERLGATVVHHTATFDPEPGAYNQAGQGHSHGHSHGHSHNHDHEHSHGHKHAH.

The segment at 143 to 181 is disordered; sequence FDPEPGAYNQAGQGHSHGHSHGHSHNHDHEHSHGHKHAH.

Belongs to the UreE family.

Its subcellular location is the cytoplasm. Its function is as follows. Involved in urease metallocenter assembly. Binds nickel. Probably functions as a nickel donor during metallocenter assembly. The protein is Urease accessory protein UreE of Marinobacter nauticus (strain ATCC 700491 / DSM 11845 / VT8) (Marinobacter aquaeolei).